We begin with the raw amino-acid sequence, 137 residues long: Small ribosomal subunit protein uS12 (137 aa).

The disordered stretch occupies residues 1–55 (MPTINQLVRKPRKSKVEKSDSPALNKGYNSFKKTQTNVNSPQKRGVCTRVGTMTP). Polar residues predominate over residues 27–42 (GYNSFKKTQTNVNSPQ). Aspartate 102 bears the 3-methylthioaspartic acid mark.

Belongs to the universal ribosomal protein uS12 family. As to quaternary structure, part of the 30S ribosomal subunit. Contacts proteins S8 and S17. May interact with IF1 in the 30S initiation complex.

Its function is as follows. With S4 and S5 plays an important role in translational accuracy. Interacts with and stabilizes bases of the 16S rRNA that are involved in tRNA selection in the A site and with the mRNA backbone. Located at the interface of the 30S and 50S subunits, it traverses the body of the 30S subunit contacting proteins on the other side and probably holding the rRNA structure together. The combined cluster of proteins S8, S12 and S17 appears to hold together the shoulder and platform of the 30S subunit. This chain is Small ribosomal subunit protein uS12, found in Enterococcus faecalis (strain ATCC 700802 / V583).